The following is a 300-amino-acid chain: tRNA dimethylallyltransferase (300 aa).

18–25 (GPTATGKS) serves as a coordination point for ATP. 20–25 (TATGKS) contributes to the substrate binding site. Residues 43 to 46 (DSRQ) form an interaction with substrate tRNA region.

It belongs to the IPP transferase family. In terms of assembly, monomer. It depends on Mg(2+) as a cofactor.

It carries out the reaction adenosine(37) in tRNA + dimethylallyl diphosphate = N(6)-dimethylallyladenosine(37) in tRNA + diphosphate. Catalyzes the transfer of a dimethylallyl group onto the adenine at position 37 in tRNAs that read codons beginning with uridine, leading to the formation of N6-(dimethylallyl)adenosine (i(6)A). The sequence is that of tRNA dimethylallyltransferase from Cyanothece sp. (strain PCC 7425 / ATCC 29141).